Reading from the N-terminus, the 467-residue chain is E3 ubiquitin-protein ligase IE61 (467 aa).

An RING-type zinc finger spans residues 19–58 (CTICMSTVSDLGKTMPCLHDFCFVCIRAWTSTSVQCPLCR). 4 disordered regions span residues 101–171 (GDVI…GVTK), 205–238 (QQPR…FRAT), 344–364 (IVRP…RDTR), and 413–467 (DSAC…MKKS). Polar residues predominate over residues 116–143 (ESIQQPTSRSSREPIQSPNPGPLQSSAR). Residues 149-161 (SPSDSQQDSIQPP) are compositionally biased toward low complexity. The span at 162–171 (TRDSSPGVTK) shows a compositional bias: polar residues. Residues 228-238 (RTMDRLPFRAT) are compositionally biased toward basic and acidic residues. Low complexity-rich tracts occupy residues 429-443 (GESN…TSGS) and 450-459 (KSSAGKAGKG).

In terms of assembly, interacts with host BTRC; this interaction seems to inactivate SCF-mediated protein degradation in general. Post-translationally, auto-ubiquitinated.

It catalyses the reaction S-ubiquitinyl-[E2 ubiquitin-conjugating enzyme]-L-cysteine + [acceptor protein]-L-lysine = [E2 ubiquitin-conjugating enzyme]-L-cysteine + N(6)-ubiquitinyl-[acceptor protein]-L-lysine.. RING-finger E3 ubiquitin ligase that degrades host SP100, one of the major components of ND10 nuclear bodies, thereby disrupting the organization of these bodies. Also plays a role in the inhibition of host NF-kappa-B pathway by blocking the SCF(BTRC)-mediated addition of ubiquitin chains to host I-kappa-B-alpha/NFKBIA, thereby interfering with its degradation. The polypeptide is E3 ubiquitin-protein ligase IE61 (61) (Varicella-zoster virus (strain Dumas) (HHV-3)).